The following is a 775-amino-acid chain: Cation channel sperm-associated protein subunit epsilon-like protein (775 aa).

The signal sequence occupies residues Met1–Ala20. Residues Asn62 and Asn114 are each glycosylated (N-linked (GlcNAc...) asparagine).

This sequence belongs to the CATSPERD family.

The sequence is that of Cation channel sperm-associated protein subunit epsilon-like protein from Mus musculus (Mouse).